Consider the following 97-residue polypeptide: Secreted RxLR effector protein BLR05 (97 aa).

An N-terminal signal peptide occupies residues 1–21; it reads MGPQHLLALVVVSILVAAGNA. The RxLR-dEER signature appears at 32-60; sequence RALRPSVIADQEHAVHAIPATNFISKDED. The chain crosses the membrane as a helical span at residues 69-89; sequence IEIIRIAIFSLLVVGVFAIMA.

Belongs to the RxLR effector family. As to quaternary structure, interacts with host transcription factor NAC069.

The protein resides in the secreted. Its subcellular location is the host endoplasmic reticulum membrane. Functionally, secreted effector that inhibits stress-induced relocalization of the transcription factor NAC069 to the nucleus, thus affecting its broad role in abiotic and biotic stress responses. This Bremia lactucae (Lettuce downy mildew) protein is Secreted RxLR effector protein BLR05.